Here is a 432-residue protein sequence, read N- to C-terminus: Nematocyst expressed protein 3-like (432 aa).

A signal peptide spans Met-1–Ala-19. Cystine bridges form between Cys-52-Cys-91, Cys-59-Cys-84, Cys-73-Cys-88, Cys-125-Cys-140, Cys-157-Cys-176, and Cys-166-Cys-180. 3 ShKT domains span residues Cys-59 to Cys-91, Val-107 to Cys-143, and Gly-149 to Tyr-183. A compositionally biased stretch (low complexity) spans Gly-235 to Ala-313. The segment at Gly-235–His-432 is disordered. The segment covering Ala-314 to Ala-330 has biased composition (pro residues). Over residues Pro-331–Gly-408 the composition is skewed to low complexity. Over residues Lys-409–His-432 the composition is skewed to basic residues.

It belongs to the NEP3 family. Nematocytes. In late planulae, transcripts are found throughout the ectoderm in nematocytes, with high concentration of expressing cells in the oral pole. In primary polyps, is expressed in nematocytes in the body wall and physa ectoderm and in the upper and lower pharynx.

The protein resides in the nematocyst. It is found in the secreted. In terms of biological role, probable toxin. The sequence is that of Nematocyst expressed protein 3-like from Nematostella vectensis (Starlet sea anemone).